The following is a 256-amino-acid chain: Small ribosomal subunit protein eS1 (256 aa).

At alanine 2 the chain carries N-acetylalanine; partial.

It belongs to the eukaryotic ribosomal protein eS1 family. Component of the small ribosomal subunit. Mature ribosomes consist of a small (40S) and a large (60S) subunit. The 40S subunit contains about 33 different proteins and 1 molecule of RNA (18S). The 60S subunit contains about 49 different proteins and 3 molecules of RNA (25S, 5.8S and 5S).

The protein localises to the cytoplasm. This Meyerozyma guilliermondii (strain ATCC 6260 / CBS 566 / DSM 6381 / JCM 1539 / NBRC 10279 / NRRL Y-324) (Yeast) protein is Small ribosomal subunit protein eS1.